The sequence spans 142 residues: Hemoglobin subunit alpha-4 (142 aa).

One can recognise a Globin domain in the interval valine 2–arginine 142. O2 is bound at residue histidine 59. Histidine 88 contacts heme b.

Belongs to the globin family. In terms of assembly, heterotetramer of two alpha chains and two beta chains. As to expression, red blood cells.

Involved in oxygen transport from the lung to the various peripheral tissues. This is Hemoglobin subunit alpha-4 from Bubalus bubalis (Domestic water buffalo).